The sequence spans 30 residues: Bacteriocin plantaricin KL-1Y (30 aa).

The protein localises to the secreted. Its function is as follows. Bacteriocin with activity against species of Lactobacillus, Lactococcus, Pediococcus, Leuconostoc and against B.subtilis and, to a lesser extent, against B.coagulans, B.cereus and species of Enterococcus, Listeria, Kocuria, Staphylococcus, Corynebacterium, Salmonella, Pseudomonas and Escherichia. The sequence is that of Bacteriocin plantaricin KL-1Y from Lactiplantibacillus plantarum (Lactobacillus plantarum).